The sequence spans 371 residues: Ferredoxin--NADP reductase, apicoplast (371 aa).

An apicoplast-targeting transit peptide spans 1 to 18; sequence MKIRFVFILSVLISGVCC. FAD is bound by residues lysine 68, 155-159, 172-179, 192-194, and threonine 235; these read ARLYS, AIKIHKYE, and YCS. Residues 68–218 form the FAD-binding FR-type domain; sequence KNPLKCKIVD…TGAHGYFNLP (151 aa). Residue lysine 174 participates in NADP(+) binding. Residues 272 to 273, serine 302, 313 to 315, and 341 to 343 contribute to the NADP(+) site; these read VY, YVQ, and HKS. Residues lysine 342 and tyrosine 371 each contribute to the FAD site.

Belongs to the ferredoxin--NADP reductase type 1 family. As to quaternary structure, monomer. Homodimer; disulfide linked. NADP binding accelerates formation of an inactive, disulfide-linked homodimer when the protein is exposed to air for 24 hours or more (in vitro); the physiological relevance of this is uncertain. Requires FAD as cofactor.

The protein localises to the plastid. It localises to the apicoplast. It catalyses the reaction 2 reduced [2Fe-2S]-[ferredoxin] + NADP(+) + H(+) = 2 oxidized [2Fe-2S]-[ferredoxin] + NADPH. Functionally, may play a role in the terminal step of the DOXP/MEP pathway for isoprenoid precursor biosynthesis. The chain is Ferredoxin--NADP reductase, apicoplast from Plasmodium falciparum (isolate 3D7).